The following is a 216-amino-acid chain: RNA pyrophosphohydrolase (216 aa).

In terms of domain architecture, Nudix hydrolase spans 6–149; the sequence is GFRPNVGIIL…KRDVYQLALT (144 aa). The Nudix box signature appears at 38-59; sequence GGIKYGETPMQAMYRELHEETG. Residues 159-188 form a disordered region; that stretch reads AQRTDKSRGPRAPRYPRVANGHAASEAPAA.

This sequence belongs to the Nudix hydrolase family. RppH subfamily. Requires a divalent metal cation as cofactor.

Functionally, accelerates the degradation of transcripts by removing pyrophosphate from the 5'-end of triphosphorylated RNA, leading to a more labile monophosphorylated state that can stimulate subsequent ribonuclease cleavage. The protein is RNA pyrophosphohydrolase of Burkholderia mallei (strain NCTC 10247).